Here is a 270-residue protein sequence, read N- to C-terminus: Bis(5'-nucleosyl)-tetraphosphatase, symmetrical (270 aa).

Belongs to the Ap4A hydrolase family.

It carries out the reaction P(1),P(4)-bis(5'-adenosyl) tetraphosphate + H2O = 2 ADP + 2 H(+). Its function is as follows. Hydrolyzes diadenosine 5',5'''-P1,P4-tetraphosphate to yield ADP. The chain is Bis(5'-nucleosyl)-tetraphosphatase, symmetrical from Actinobacillus pleuropneumoniae serotype 5b (strain L20).